A 346-amino-acid polypeptide reads, in one-letter code: dTDP-glucose 4,6-dehydratase (346 aa).

NAD(+) is bound by residues 17-18 (FI), 38-41 (DKLT), 64-65 (DI), 86-90 (LAAES), and Thr105. Residue Ser90 coordinates substrate. Thr139 serves as a coordination point for substrate. The Proton donor role is filled by Asp140. Active-site proton acceptor residues include Glu141 and Tyr165. 165-169 (YSASK) provides a ligand contact to NAD(+). Position 194 (Asn194) interacts with substrate. NAD(+) is bound at residue Asn195. Substrate contacts are provided by residues 204-205 (KL), 220-222 (PVY), Arg229, Asn264, and 298-302 (DRPGH).

Belongs to the NAD(P)-dependent epimerase/dehydratase family. dTDP-glucose dehydratase subfamily. Homodimer. The cofactor is NAD(+).

The enzyme catalyses dTDP-alpha-D-glucose = dTDP-4-dehydro-6-deoxy-alpha-D-glucose + H2O. Its pathway is carbohydrate biosynthesis; dTDP-L-rhamnose biosynthesis. It participates in bacterial outer membrane biogenesis; LPS O-antigen biosynthesis. In terms of biological role, catalyzes the dehydration of dTDP-D-glucose to form dTDP-6-deoxy-D-xylo-4-hexulose via a three-step process involving oxidation, dehydration and reduction. The protein is dTDP-glucose 4,6-dehydratase of Neisseria gonorrhoeae.